A 171-amino-acid chain; its full sequence is Myelin basic protein (171 aa).

Position 1 is an N-acetylalanine (alanine 1). Serine 7 and serine 12 each carry phosphoserine. Tyrosine 14 carries the post-translational modification Phosphotyrosine. A Phosphothreonine modification is found at threonine 17. Serine 19 is subject to Phosphoserine. Residue threonine 20 is modified to Phosphothreonine. 2 positions are modified to citrulline: arginine 25 and arginine 31. Threonine 35 is subject to Phosphothreonine. A Phosphoserine modification is found at serine 40. 2 positions are modified to omega-N-methylarginine: arginine 43 and arginine 49. The interval 44–115 is disordered; the sequence is FFGGDRGAPK…GRGLSLSRFS (72 aa). Serine 56 bears the Phosphoserine mark. At tyrosine 69 the chain carries Phosphotyrosine. Serine 76 carries the phosphoserine modification. 3 positions are modified to phosphothreonine: threonine 80, threonine 95, and threonine 98. Glutamine 103 is subject to Deamidated glutamine. Residue arginine 107 is modified to Omega-N-methylarginine; alternate. Arginine 107 is modified (symmetric dimethylarginine; alternate). A Phosphoserine modification is found at serine 115. 2 positions are modified to citrulline: arginine 122 and arginine 130. Glutamine 148 carries the post-translational modification Deamidated glutamine. Arginine 160 is subject to Citrulline. The residue at position 162 (serine 162) is a Phosphoserine. The residue at position 166 (serine 166) is a Phosphoserine; by UHMK1. Arginine 171 carries the post-translational modification Citrulline.

The protein belongs to the myelin basic protein family. In terms of assembly, homodimer. In terms of processing, as in other animals, several charge isomers may be produced as a result of optional post-translational modifications, such as phosphorylation of serine or threonine residues, deamidation of glutamine or asparagine residues, citrullination and methylation of arginine residues. Phosphorylated by TAOK2, VRK2, MAPK11, MAPK12, MAPK14 and MINK1. Post-translationally, proteolytically cleaved in B cell lysosomes by cathepsin CTSG which degrades the major immunogenic MBP epitope and prevents the activation of MBP-specific autoreactive T cells.

It is found in the myelin membrane. Its function is as follows. Is, with PLP, the most abundant protein component of the myelin membrane in the CNS. Has a role in both the formation and stabilization of this compact multilayer arrangement of bilayers. Each splice variant and charge isomer may have a specialized function in the assembly of an optimized, biochemically functional myelin membrane. The sequence is that of Myelin basic protein (MBP) from Pan troglodytes (Chimpanzee).